We begin with the raw amino-acid sequence, 144 residues long: Large ribosomal subunit protein uL13 (144 aa).

It belongs to the universal ribosomal protein uL13 family. In terms of assembly, part of the 50S ribosomal subunit.

This protein is one of the early assembly proteins of the 50S ribosomal subunit, although it is not seen to bind rRNA by itself. It is important during the early stages of 50S assembly. This chain is Large ribosomal subunit protein uL13, found in Desulfovibrio desulfuricans (strain ATCC 27774 / DSM 6949 / MB).